The chain runs to 156 residues: Small ribosomal subunit protein uS7 (156 aa).

Belongs to the universal ribosomal protein uS7 family. As to quaternary structure, part of the 30S ribosomal subunit. Contacts proteins S9 and S11.

In terms of biological role, one of the primary rRNA binding proteins, it binds directly to 16S rRNA where it nucleates assembly of the head domain of the 30S subunit. Is located at the subunit interface close to the decoding center, probably blocks exit of the E-site tRNA. The sequence is that of Small ribosomal subunit protein uS7 from Nitrobacter hamburgensis (strain DSM 10229 / NCIMB 13809 / X14).